The chain runs to 227 residues: Cytochrome c oxidase subunit 2 (227 aa).

The Mitochondrial intermembrane portion of the chain corresponds to 1–14 (MAYPFQLGLQDATS). A helical transmembrane segment spans residues 15–45 (PIMEELTNFHDHTLMIVFLISTLVLYIISLM). Residues 46–59 (LTTKLTHTSTMDAQ) are Mitochondrial matrix-facing. The helical transmembrane segment at 60–87 (EVETIWTILPAVILILIALPSLRILYMM) threads the bilayer. Residues 88–227 (DEINNPALTV…YFEDWSASMI (140 aa)) lie on the Mitochondrial intermembrane side of the membrane. Residues His-161, Cys-196, Glu-198, Cys-200, His-204, and Met-207 each contribute to the Cu cation site. Residue Glu-198 participates in Mg(2+) binding. Phosphotyrosine is present on Tyr-218.

It belongs to the cytochrome c oxidase subunit 2 family. Component of the cytochrome c oxidase (complex IV, CIV), a multisubunit enzyme composed of 14 subunits. The complex is composed of a catalytic core of 3 subunits MT-CO1, MT-CO2 and MT-CO3, encoded in the mitochondrial DNA, and 11 supernumerary subunits COX4I, COX5A, COX5B, COX6A, COX6B, COX6C, COX7A, COX7B, COX7C, COX8 and NDUFA4, which are encoded in the nuclear genome. The complex exists as a monomer or a dimer and forms supercomplexes (SCs) in the inner mitochondrial membrane with NADH-ubiquinone oxidoreductase (complex I, CI) and ubiquinol-cytochrome c oxidoreductase (cytochrome b-c1 complex, complex III, CIII), resulting in different assemblies (supercomplex SCI(1)III(2)IV(1) and megacomplex MCI(2)III(2)IV(2)). Found in a complex with TMEM177, COA6, COX18, COX20, SCO1 and SCO2. Interacts with TMEM177 in a COX20-dependent manner. Interacts with COX20. Interacts with COX16. Cu cation serves as cofactor.

It is found in the mitochondrion inner membrane. It carries out the reaction 4 Fe(II)-[cytochrome c] + O2 + 8 H(+)(in) = 4 Fe(III)-[cytochrome c] + 2 H2O + 4 H(+)(out). In terms of biological role, component of the cytochrome c oxidase, the last enzyme in the mitochondrial electron transport chain which drives oxidative phosphorylation. The respiratory chain contains 3 multisubunit complexes succinate dehydrogenase (complex II, CII), ubiquinol-cytochrome c oxidoreductase (cytochrome b-c1 complex, complex III, CIII) and cytochrome c oxidase (complex IV, CIV), that cooperate to transfer electrons derived from NADH and succinate to molecular oxygen, creating an electrochemical gradient over the inner membrane that drives transmembrane transport and the ATP synthase. Cytochrome c oxidase is the component of the respiratory chain that catalyzes the reduction of oxygen to water. Electrons originating from reduced cytochrome c in the intermembrane space (IMS) are transferred via the dinuclear copper A center (CU(A)) of subunit 2 and heme A of subunit 1 to the active site in subunit 1, a binuclear center (BNC) formed by heme A3 and copper B (CU(B)). The BNC reduces molecular oxygen to 2 water molecules using 4 electrons from cytochrome c in the IMS and 4 protons from the mitochondrial matrix. This is Cytochrome c oxidase subunit 2 (MT-CO2) from Hybomys univittatus (Peter's striped mouse).